We begin with the raw amino-acid sequence, 180 residues long: Large ribosomal subunit protein uL16 (180 aa).

It belongs to the universal ribosomal protein uL16 family.

The protein is Large ribosomal subunit protein uL16 of Pyrobaculum aerophilum (strain ATCC 51768 / DSM 7523 / JCM 9630 / CIP 104966 / NBRC 100827 / IM2).